A 267-amino-acid polypeptide reads, in one-letter code: Dihydropteroate synthase (267 aa).

Positions 1–251 (MTKTKIMGIL…NVELNAKLAK (251 aa)) constitute a Pterin-binding domain. A Mg(2+)-binding site is contributed by Asn11. (7,8-dihydropterin-6-yl)methyl diphosphate contacts are provided by residues Thr51, Asp84, Asn103, Asp167, Lys203, and 239-241 (RVH).

This sequence belongs to the DHPS family. In terms of assembly, homodimer. Mg(2+) is required as a cofactor.

It carries out the reaction (7,8-dihydropterin-6-yl)methyl diphosphate + 4-aminobenzoate = 7,8-dihydropteroate + diphosphate. Its pathway is cofactor biosynthesis; tetrahydrofolate biosynthesis; 7,8-dihydrofolate from 2-amino-4-hydroxy-6-hydroxymethyl-7,8-dihydropteridine diphosphate and 4-aminobenzoate: step 1/2. In terms of biological role, catalyzes the condensation of para-aminobenzoate (pABA) with 6-hydroxymethyl-7,8-dihydropterin diphosphate (DHPt-PP) to form 7,8-dihydropteroate (H2Pte), the immediate precursor of folate derivatives. The polypeptide is Dihydropteroate synthase (folP) (Staphylococcus aureus (strain MSSA476)).